The chain runs to 192 residues: Putative 3-methyladenine DNA glycosylase (192 aa).

This sequence belongs to the DNA glycosylase MPG family.

The polypeptide is Putative 3-methyladenine DNA glycosylase (Bdellovibrio bacteriovorus (strain ATCC 15356 / DSM 50701 / NCIMB 9529 / HD100)).